Consider the following 316-residue polypeptide: tRNA pseudouridine synthase B (316 aa).

Asp38 acts as the Nucleophile in catalysis. Residues 238 to 312 enclose the PUA domain; it reads YPEVIVKSSA…PVCVLARQAG (75 aa).

Belongs to the pseudouridine synthase TruB family. Type 1 subfamily.

It catalyses the reaction uridine(55) in tRNA = pseudouridine(55) in tRNA. In terms of biological role, responsible for synthesis of pseudouridine from uracil-55 in the psi GC loop of transfer RNAs. The protein is tRNA pseudouridine synthase B of Pelotomaculum thermopropionicum (strain DSM 13744 / JCM 10971 / SI).